Consider the following 502-residue polypeptide: ATP synthase subunit beta (502 aa).

156–163 (GGAGVGKT) contacts ATP.

The protein belongs to the ATPase alpha/beta chains family. In terms of assembly, F-type ATPases have 2 components, CF(1) - the catalytic core - and CF(0) - the membrane proton channel. CF(1) has five subunits: alpha(3), beta(3), gamma(1), delta(1), epsilon(1). CF(0) has three main subunits: a(1), b(2) and c(9-12). The alpha and beta chains form an alternating ring which encloses part of the gamma chain. CF(1) is attached to CF(0) by a central stalk formed by the gamma and epsilon chains, while a peripheral stalk is formed by the delta and b chains.

The protein localises to the cell membrane. The enzyme catalyses ATP + H2O + 4 H(+)(in) = ADP + phosphate + 5 H(+)(out). In terms of biological role, produces ATP from ADP in the presence of a proton gradient across the membrane. The catalytic sites are hosted primarily by the beta subunits. The protein is ATP synthase subunit beta of Cellulophaga lytica (Cytophaga lytica).